The sequence spans 281 residues: Endonuclease III-like protein 1 (281 aa).

The transit peptide at 1–17 (MCAAAPRGGGRAARRLG) directs the protein to the mitochondrion. The interval 1–60 (MCAAAPRGGGRAARRLGAATAGSRVPSAAPRYSRRTRRVPIAYEAEPKPESPGPKWEPEN) is disordered. A compositionally biased stretch (low complexity) spans 15–24 (RLGAATAGSR). The HhH domain maps to 168–192 (KYGGDIPGTVEELVKLPGVGPKMAH). Catalysis depends on Lys-189, which acts as the Nucleophile; for N-glycosylase activity. Cys-259, Cys-266, Cys-269, and Cys-275 together coordinate [4Fe-4S] cluster.

The protein belongs to the Nth/MutY family. [4Fe-4S] cluster is required as a cofactor.

The protein resides in the nucleus. Its subcellular location is the mitochondrion. It carries out the reaction 2'-deoxyribonucleotide-(2'-deoxyribose 5'-phosphate)-2'-deoxyribonucleotide-DNA = a 3'-end 2'-deoxyribonucleotide-(2,3-dehydro-2,3-deoxyribose 5'-phosphate)-DNA + a 5'-end 5'-phospho-2'-deoxyribonucleoside-DNA + H(+). Functionally, bifunctional DNA N-glycosylase with associated apurinic/apyrimidinic (AP) lyase function that catalyzes the first step in base excision repair (BER), the primary repair pathway for the repair of oxidative DNA damage. The DNA N-glycosylase activity releases the damaged DNA base from DNA by cleaving the N-glycosidic bond, leaving an AP site. The AP lyase activity cleaves the phosphodiester bond 3' to the AP site by a beta-elimination. Primarily recognizes and repairs oxidative base damage of pyrimidines. This chain is Endonuclease III-like protein 1, found in Gallus gallus (Chicken).